Consider the following 484-residue polypeptide: Glycogen synthase (484 aa).

K15 provides a ligand contact to ADP-alpha-D-glucose.

This sequence belongs to the glycosyltransferase 1 family. Bacterial/plant glycogen synthase subfamily.

It catalyses the reaction [(1-&gt;4)-alpha-D-glucosyl](n) + ADP-alpha-D-glucose = [(1-&gt;4)-alpha-D-glucosyl](n+1) + ADP + H(+). It functions in the pathway glycan biosynthesis; glycogen biosynthesis. In terms of biological role, synthesizes alpha-1,4-glucan chains using ADP-glucose. In Bacillus licheniformis (strain ATCC 14580 / DSM 13 / JCM 2505 / CCUG 7422 / NBRC 12200 / NCIMB 9375 / NCTC 10341 / NRRL NRS-1264 / Gibson 46), this protein is Glycogen synthase.